The chain runs to 428 residues: D-amino acid dehydrogenase (428 aa).

An FAD-binding site is contributed by 3 to 17 (VVILGSGVVGVASAY).

The protein belongs to the DadA oxidoreductase family. The cofactor is FAD.

The catalysed reaction is a D-alpha-amino acid + A + H2O = a 2-oxocarboxylate + AH2 + NH4(+). Its pathway is amino-acid degradation; D-alanine degradation; NH(3) and pyruvate from D-alanine: step 1/1. Oxidative deamination of D-amino acids. The sequence is that of D-amino acid dehydrogenase from Burkholderia cenocepacia (strain ATCC BAA-245 / DSM 16553 / LMG 16656 / NCTC 13227 / J2315 / CF5610) (Burkholderia cepacia (strain J2315)).